A 462-amino-acid polypeptide reads, in one-letter code: MAKFRRGTCIILALFILFIFSLMMGLKMLRPNTATFGAPFGLDLLPELHQRTVHLGKSFDFQKSDRINSETNTKNLKSVEITMKPSKASELNLDELPPLNNYLHVFYYSWYGNPQFDGKYIHWNHPVLEHWDPRIAKNYPQGRHNPPDDIGSSFYPELGSYSSRDPSVIETHMRQMRSASIGVLALSWYPPDVNDENGEPTDNLVPTILDKAHKYNLKVTFHIEPYSNRDDQNMYKNVKYIIDKYGNHPAFYRYKTKTGNALPMFYVYDSYITKPEKWANLLTTSGSWSIRNSPYDGLFIALLVEEKHKYDILQSGFDGIYTYFATNGFTYGSSHQNWASLKLFCDKYNLIFIPSVGPGYIDTSIRPWNTQNTRNRINGKYYEIALSAALQTHPSLISITSFNEWHEGTQIEKAVPKRTSNTVYLDYRPHKPGLYLELTRKWSEKYSKERATYALDHQLPVS.

The Cytoplasmic portion of the chain corresponds to 1-8 (MAKFRRGT). A helical; Signal-anchor for type II membrane protein transmembrane segment spans residues 9-29 (CIILALFILFIFSLMMGLKML). The Lumenal segment spans residues 30–462 (RPNTATFGAP…YALDHQLPVS (433 aa)). The interval 60-462 (DFQKSDRINS…YALDHQLPVS (403 aa)) is catalytic.

Belongs to the glycosyl hydrolase 99 family. Undergoes proteolytic cleavage in the C-terminal region.

Its subcellular location is the golgi apparatus membrane. The catalysed reaction is N-{alpha-Glc-(1-&gt;3)-alpha-Man-(1-&gt;2)-alpha-Man-(1-&gt;2)-alpha-Man-(1-&gt;3)-[alpha-Man-(1-&gt;2)-alpha-Man-(1-&gt;3)-[alpha-Man-(1-&gt;2)-alpha-Man-(1-&gt;6)]-alpha-Man-(1-&gt;6)]-beta-Man-(1-&gt;4)-beta-GlcNAc-(1-&gt;4)-beta-GlcNAc}-L-asparaginyl-[protein] + H2O = alpha-D-glucosyl-(1-&gt;3)-D-mannopyranose + N(4)-{alpha-D-Man-(1-&gt;2)-alpha-D-Man-(1-&gt;3)-[alpha-D-Man-(1-&gt;2)-alpha-D-Man-(1-&gt;3)-[alpha-D-Man-(1-&gt;2)-alpha-D-Man-(1-&gt;6)]-alpha-D-Man-(1-&gt;6)]-beta-D-Man-(1-&gt;4)-beta-D-GlaNAc-(1-&gt;4)-beta-D-GlcNAc}-L-asparaginyl-[protein] (N-glucan mannose isomer 8A1,2,3B1,2). The polypeptide is Glycoprotein endo-alpha-1,2-mannosidase (MANEA) (Pongo abelii (Sumatran orangutan)).